The following is a 132-amino-acid chain: uncharacterized protein (132 aa).

The next 4 helical transmembrane spans lie at 6 to 26 (WIYAVFTILIIGLGLGSRAFS), 34 to 54 (NTYLGDSLWAAMIFTGCGFLF), 59 to 79 (TMITGIISLSFCFVIEFSQLY), and 106 to 126 (IEAYTIGIAACAAIELLVLGI).

The protein localises to the cell membrane. This is an uncharacterized protein from Bacillus subtilis (strain 168).